Here is a 395-residue protein sequence, read N- to C-terminus: MAAEASESGPALHELMREAEISLLECKVCFEKFGHRQQRRPRNLSCGHVVCLACVAALAHPRTLALECPFCRRACRGCDTSDCLPVLHLIELLGSALRQSPAAHRAAPSAPGALTCHHTFGGWGTLVNPTGLALCPKTGRVVVVHDGRRRVKIFDSGGGCAHQFGEKGDAAQDIRYPVDVTITNDCHVVVTDAGDRSIKVFDFFGQIKLVIGGQFSLPWGVETTPQNGIVVTDAEAGSLHLLDVDFAEGVLRRTERLQAHLCNPRGVAVSWLTGAIAVLEHPLALGTGVCSTRVKVFSSSMQLVGQVDTFGLSLYFPSKITASAVTFDHQGNVIVADTSGPAILCLGKPEEFPVPKPMVTHGLSHPVALTFTKENSLLVLDTASHSIKVYKVDWG.

The segment at 26–72 adopts an RING-type zinc-finger fold; the sequence is CKVCFEKFGHRQQRRPRNLSCGHVVCLACVAALAHPRTLALECPFCR. 6 NHL repeats span residues 113–157, 161–204, 205–245, 248–300, 301–349, and 350–393; these read ALTC…FDSG, AHQF…FDFF, GQIK…LDVD, EGVL…FSSS, MQLV…LGKP, and EEFP…YKVD.

Interacts with AGL. Interacts (via the NHL repeats) with EPM2A/laforin. Forms a complex with EPM2A/laforin and HSP70. Interacts with PRDM8. Expressed in brain, cerebellum, spinal cord, medulla, heart, liver, skeletal muscle and pancreas.

The protein resides in the endoplasmic reticulum. Its subcellular location is the nucleus. It carries out the reaction S-ubiquitinyl-[E2 ubiquitin-conjugating enzyme]-L-cysteine + [acceptor protein]-L-lysine = [E2 ubiquitin-conjugating enzyme]-L-cysteine + N(6)-ubiquitinyl-[acceptor protein]-L-lysine.. The protein operates within protein modification; protein ubiquitination. Functionally, E3 ubiquitin-protein ligase. Together with the phosphatase EPM2A/laforin, appears to be involved in the clearance of toxic polyglucosan and protein aggregates via multiple pathways. In complex with EPM2A/laforin and HSP70, suppresses the cellular toxicity of misfolded proteins by promoting their degradation through the ubiquitin-proteasome system (UPS). Ubiquitinates the glycogen-targeting protein phosphatase subunits PPP1R3C/PTG and PPP1R3D in a laforin-dependent manner and targets them for proteasome-dependent degradation, thus decreasing glycogen accumulation. Polyubiquitinates EPM2A/laforin and ubiquitinates AGL and targets them for proteasome-dependent degradation. Also promotes proteasome-independent protein degradation through the macroautophagy pathway. This Homo sapiens (Human) protein is E3 ubiquitin-protein ligase NHLRC1 (NHLRC1).